The chain runs to 199 residues: Holliday junction branch migration complex subunit RuvA (199 aa).

A domain I region spans residues 1–62 (MIAYIKGLLA…EDGIQFFGFA (62 aa)). The interval 63-141 (KEDEKECFLL…GMAAVEHSTL (79 aa)) is domain II. A flexible linker region spans residues 142–152 (QQSVITTGSGD). Residues 152–199 (DEAVEALLALGYSQGEARDAVKKAQKSAPEEDLSALIKIALKELAPSR) form a domain III region.

It belongs to the RuvA family. In terms of assembly, homotetramer. Forms an RuvA(8)-RuvB(12)-Holliday junction (HJ) complex. HJ DNA is sandwiched between 2 RuvA tetramers; dsDNA enters through RuvA and exits via RuvB. An RuvB hexamer assembles on each DNA strand where it exits the tetramer. Each RuvB hexamer is contacted by two RuvA subunits (via domain III) on 2 adjacent RuvB subunits; this complex drives branch migration. In the full resolvosome a probable DNA-RuvA(4)-RuvB(12)-RuvC(2) complex forms which resolves the HJ.

It localises to the cytoplasm. Functionally, the RuvA-RuvB-RuvC complex processes Holliday junction (HJ) DNA during genetic recombination and DNA repair, while the RuvA-RuvB complex plays an important role in the rescue of blocked DNA replication forks via replication fork reversal (RFR). RuvA specifically binds to HJ cruciform DNA, conferring on it an open structure. The RuvB hexamer acts as an ATP-dependent pump, pulling dsDNA into and through the RuvAB complex. HJ branch migration allows RuvC to scan DNA until it finds its consensus sequence, where it cleaves and resolves the cruciform DNA. This chain is Holliday junction branch migration complex subunit RuvA, found in Desulforamulus reducens (strain ATCC BAA-1160 / DSM 100696 / MI-1) (Desulfotomaculum reducens).